The chain runs to 339 residues: MRVYYDRDADLNLIKSKNVVIVGYGSQGRAHALNLKDSGAKNVVIALKAGSPTVKKAEADGFKVMTVAEAAKWGDLLMMATPDELQADIYKADIAGNIRDGAAIAFAHGLNVHFGLIEPKASLDVVMIAPKGPGHTVRGEYQKGGGVPCLVAVHHNASGNALELALSYACGVGGGRSGIIETNFKEECETDLFGEQVVLCGGLVELIRAGFETLTEAGYAPEMAYFECLHEVKLIVDLIYEGGIANMNYSISNTAEWGEYVTGPRIITAETKAEMKRVLHDIQTGKFTSDWMQEYRSGAARFKGIRRMNDTHQIEEVGAKLRGMMPWIGKNKLVDKAVN.

The region spanning 1–182 (MRVYYDRDAD…GGGRSGIIET (182 aa)) is the KARI N-terminal Rossmann domain. Residues 24–27 (YGSQ), Lys48, Ser51, Thr53, and 83–86 (DELQ) each bind NADP(+). Residue His108 is part of the active site. Position 134 (Gly134) interacts with NADP(+). One can recognise a KARI C-terminal knotted domain in the interval 183–328 (NFKEECETDL…AKLRGMMPWI (146 aa)). Mg(2+) is bound by residues Asp191, Glu195, Glu227, and Glu231. Position 252 (Ser252) interacts with substrate.

It belongs to the ketol-acid reductoisomerase family. Requires Mg(2+) as cofactor.

The catalysed reaction is (2R)-2,3-dihydroxy-3-methylbutanoate + NADP(+) = (2S)-2-acetolactate + NADPH + H(+). It catalyses the reaction (2R,3R)-2,3-dihydroxy-3-methylpentanoate + NADP(+) = (S)-2-ethyl-2-hydroxy-3-oxobutanoate + NADPH + H(+). The protein operates within amino-acid biosynthesis; L-isoleucine biosynthesis; L-isoleucine from 2-oxobutanoate: step 2/4. Its pathway is amino-acid biosynthesis; L-valine biosynthesis; L-valine from pyruvate: step 2/4. Its function is as follows. Involved in the biosynthesis of branched-chain amino acids (BCAA). Catalyzes an alkyl-migration followed by a ketol-acid reduction of (S)-2-acetolactate (S2AL) to yield (R)-2,3-dihydroxy-isovalerate. In the isomerase reaction, S2AL is rearranged via a Mg-dependent methyl migration to produce 3-hydroxy-3-methyl-2-ketobutyrate (HMKB). In the reductase reaction, this 2-ketoacid undergoes a metal-dependent reduction by NADPH to yield (R)-2,3-dihydroxy-isovalerate. This chain is Ketol-acid reductoisomerase (NADP(+)), found in Agrobacterium fabrum (strain C58 / ATCC 33970) (Agrobacterium tumefaciens (strain C58)).